We begin with the raw amino-acid sequence, 189 residues long: UPF0312 protein VIBHAR_05924 (189 aa).

The first 22 residues, 1 to 22 (MKKSLFATGLAIAIALPFGANA), serve as a signal peptide directing secretion.

The protein belongs to the UPF0312 family. Type 1 subfamily.

It localises to the periplasm. The protein is UPF0312 protein VIBHAR_05924 of Vibrio campbellii (strain ATCC BAA-1116).